Consider the following 591-residue polypeptide: Aspartate--tRNA ligase (591 aa).

Glutamate 174 provides a ligand contact to L-aspartate. Residues 198–201 (QLFK) form an aspartate region. Residue arginine 220 coordinates L-aspartate. ATP-binding positions include 220–222 (RDE) and glutamine 229. Histidine 450 serves as a coordination point for L-aspartate. Residue glutamate 486 coordinates ATP. Residue arginine 493 participates in L-aspartate binding. An ATP-binding site is contributed by 538–541 (GLDR).

The protein belongs to the class-II aminoacyl-tRNA synthetase family. Type 1 subfamily. As to quaternary structure, homodimer.

Its subcellular location is the cytoplasm. It carries out the reaction tRNA(Asp) + L-aspartate + ATP = L-aspartyl-tRNA(Asp) + AMP + diphosphate. Its function is as follows. Catalyzes the attachment of L-aspartate to tRNA(Asp) in a two-step reaction: L-aspartate is first activated by ATP to form Asp-AMP and then transferred to the acceptor end of tRNA(Asp). This Leuconostoc mesenteroides subsp. mesenteroides (strain ATCC 8293 / DSM 20343 / BCRC 11652 / CCM 1803 / JCM 6124 / NCDO 523 / NBRC 100496 / NCIMB 8023 / NCTC 12954 / NRRL B-1118 / 37Y) protein is Aspartate--tRNA ligase.